Reading from the N-terminus, the 67-residue chain is DNA-directed RNA polymerase subunit omega (67 aa).

The protein belongs to the RNA polymerase subunit omega family. In terms of assembly, the RNAP catalytic core consists of 2 alpha, 1 beta, 1 beta' and 1 omega subunit. When a sigma factor is associated with the core the holoenzyme is formed, which can initiate transcription.

The catalysed reaction is RNA(n) + a ribonucleoside 5'-triphosphate = RNA(n+1) + diphosphate. Functionally, promotes RNA polymerase assembly. Latches the N- and C-terminal regions of the beta' subunit thereby facilitating its interaction with the beta and alpha subunits. This chain is DNA-directed RNA polymerase subunit omega, found in Cupriavidus metallidurans (strain ATCC 43123 / DSM 2839 / NBRC 102507 / CH34) (Ralstonia metallidurans).